Here is a 264-residue protein sequence, read N- to C-terminus: Myozenin-2 (264 aa).

Arg-53 is subject to Omega-N-methylarginine. The interval 90 to 135 (GRVDGSNLEGGSQQGPSTPPNTPDPRSPPNPENIAPGYSGPLKEIP) is disordered. Ser-101 bears the Phosphoserine mark. Residues 106 to 120 (STPPNTPDPRSPPNP) are compositionally biased toward pro residues. Phosphothreonine occurs at positions 107 and 111. Ser-116 is subject to Phosphoserine.

Belongs to the myozenin family. Interacts via its C-terminus with spectrin repeats 3 and 4 of ACTN2. Interacts with ACTN1, LDB3, MYOT and PPP3CA. In terms of tissue distribution, expressed specifically in heart and skeletal muscle. In skeletal muscle, localized to the soleus and plantaris muscles, which are predominantly composed of slow-twitch fibers.

The protein localises to the cytoplasm. It is found in the myofibril. It localises to the sarcomere. Its subcellular location is the z line. Its function is as follows. Myozenins may serve as intracellular binding proteins involved in linking Z line proteins such as alpha-actinin, gamma-filamin, TCAP/telethonin, LDB3/ZASP and localizing calcineurin signaling to the sarcomere. Plays an important role in the modulation of calcineurin signaling. May play a role in myofibrillogenesis. This is Myozenin-2 from Mus musculus (Mouse).